Here is a 198-residue protein sequence, read N- to C-terminus: Recombination protein RecR (198 aa).

The C4-type zinc finger occupies 57–72 (CSICGNLTESDPCAIC). In terms of domain architecture, Toprim spans 80–175 (TTILVVEESK…KVTRLAHGLA (96 aa)).

The protein belongs to the RecR family.

Functionally, may play a role in DNA repair. It seems to be involved in an RecBC-independent recombinational process of DNA repair. It may act with RecF and RecO. The polypeptide is Recombination protein RecR (Lactococcus lactis subsp. cremoris (strain SK11)).